The sequence spans 559 residues: YTH domain-containing family protein 1 (559 aa).

Residues 1–49 (MSATSVDPQRTKGQDNKVQNGSLHQKDAVHDNDFEPYLSGQSNPSNSYP) are disordered. At S2 the chain carries N-acetylserine. Residues 24-33 (HQKDAVHDND) are compositionally biased toward basic and acidic residues. A Phosphoserine modification is found at S182. A disordered region spans residues 239 to 365 (SKPAKPQPKM…PTSAPSVESH (127 aa)). 2 stretches are compositionally biased toward low complexity: residues 279-305 (PAPK…AQPL) and 314-326 (QPQY…PLQP). Residues 343–361 (GANSDSNSVGNAQPTSAPS) are compositionally biased toward polar residues. The YTH domain occupies 389 to 523 (GRVFIIKSYS…EKAKQVLKII (135 aa)). Residues 395 to 397 (KSY), D401, 411 to 412 (WC), N441, W465, and W470 contribute to the RNA site.

It belongs to the YTHDF family. YTHDF1 subfamily. In terms of assembly, interacts with CNOT1; promoting recruitment of the CCR4-NOT complex. Interacts with ribosomes. Interacts with eIF3 (EIF3A or EIF3B). Interacts with YTHDF3. Post-translationally, ubiquitinated by the CUL7-FBXW8 E3 ligase complex leading to degradation. Deubiquitinated and stabilized by USP5 by removing 'Lys-11'-linked polyubiquitination. In brain, preferentially expressed in the hippocampus.

The protein resides in the cytoplasm. The protein localises to the P-body. It is found in the stress granule. Its function is as follows. Specifically recognizes and binds N6-methyladenosine (m6A)-containing mRNAs, and regulates their stability. M6A is a modification present at internal sites of mRNAs and some non-coding RNAs and plays a role in mRNA stability and processing. Acts as a regulator of mRNA stability by promoting degradation of m6A-containing mRNAs via interaction with the CCR4-NOT complex. The YTHDF paralogs (YTHDF1, YTHDF2 and YTHDF3) share m6A-containing mRNAs targets and act redundantly to mediate mRNA degradation and cellular differentiation. Required to facilitate learning and memory formation in the hippocampus by binding to m6A-containing neuronal mRNAs. Acts as a regulator of axon guidance by binding to m6A-containing ROBO3 transcripts. Acts as a negative regulator of antigen cross-presentation in myeloid dendritic cells. In the context of tumorigenesis, negative regulation of antigen cross-presentation limits the anti-tumor response by reducing efficiency of tumor-antigen cross-presentation. Promotes formation of phase-separated membraneless compartments, such as P-bodies or stress granules, by undergoing liquid-liquid phase separation upon binding to mRNAs containing multiple m6A-modified residues: polymethylated mRNAs act as a multivalent scaffold for the binding of YTHDF proteins, juxtaposing their disordered regions and thereby leading to phase separation. The resulting mRNA-YTHDF complexes then partition into different endogenous phase-separated membraneless compartments, such as P-bodies, stress granules or neuronal RNA granules. This is YTH domain-containing family protein 1 from Mus musculus (Mouse).